Here is a 1598-residue protein sequence, read N- to C-terminus: Fatty acid synthase subunit alpha (1598 aa).

A disordered region spans residues arginine 96–valine 134. Over residues alanine 104–lysine 115 the composition is skewed to low complexity. The 79-residue stretch at aspartate 143–threonine 221 folds into the Carrier domain. Serine 181 is subject to O-(pantetheine 4'-phosphoryl)serine. Residues leucine 543 to alanine 784 are ketoreductase (KR) domain. The segment at lysine 818–proline 844 is disordered. Positions aspartate 820 to histidine 829 are enriched in polar residues. One can recognise a Ketosynthase family 3 (KS3) domain in the interval histidine 992–histidine 1524. The active-site For beta-ketoacyl synthase activity is cysteine 1175. The segment at alanine 1280 to glutamate 1301 is disordered. Active-site for beta-ketoacyl synthase activity residues include histidine 1409 and histidine 1450.

The protein belongs to the thiolase-like superfamily. Fungal fatty acid synthetase subunit alpha family. In terms of assembly, fatty acid synthase is composed of alpha and beta subunits.

It carries out the reaction acetyl-CoA + n malonyl-CoA + 2n NADPH + 4n H(+) = a long-chain-acyl-CoA + n CoA + n CO2 + 2n NADP(+).. The enzyme catalyses a fatty acyl-[ACP] + malonyl-[ACP] + H(+) = a 3-oxoacyl-[ACP] + holo-[ACP] + CO2. The catalysed reaction is a (3R)-hydroxyacyl-[ACP] + NADP(+) = a 3-oxoacyl-[ACP] + NADPH + H(+). Its pathway is mycotoxin biosynthesis. Fatty acid synthase subunit alpha; part of the gene cluster that mediates the biosynthesis of gramillins A and B, bicyclic lipopeptides that induce cell death in maize leaves but not in wheat leaves. The nonribosomal peptide synthetase GRA1 incorporates respectively a glutamic adic (Glu), a leucine (Leu), a serine (Ser), a hydroxyglutamine (HOGln), a 2-amino decanoic acid, and 2 cysteins (CysB and CysA). The biosynthesis of 2-amino decanoic acid incorporated in gramillins could be initiated by a fatty acid synthase composed of the alpha and beta subunits FGSG_00036 and FGSG_11656. The cytochrome P450 monooxygenase FGSG_15680 could hydroxylate the fatty acid chain. Subsequent oxidation to the ketone by the oxidoreductase FGSG_00048 and transamination by aminotransferase FGSG_00049 could form 2-amino-decanoic acid. On the other hand, FGSG_15680 could also be responsible for the HO-modified glutamine at the gamma-position. Whether hydroxylation occurs on the fully assembled product or on the Gln residue prior to assembly into the gramillins requires further proof. The thioredoxin FGSG_00043 could also be required for the disulfide-bond formation between CysA and CysB. The specific involvement of the remaining proteins from the cluster is more difficult to discern, but could have broader regulatory (FGSG_00040 and FGSG_11657) or enzymatic functions (FGSG_00044 and FGSG_00045). The final C-domain of GRA1 does not possess the expected sequence of a termination CT domain, often implicated in macrocyclization and release of a cyclopeptidein fungal NRPs; and the thioesterase FGSG_00047 may act in concert with the terminal C-domain of GRA1 to catalyze the formation of the macrocyclic anhydride and release of the products. The protein is Fatty acid synthase subunit alpha of Gibberella zeae (strain ATCC MYA-4620 / CBS 123657 / FGSC 9075 / NRRL 31084 / PH-1) (Wheat head blight fungus).